The primary structure comprises 443 residues: Mitochondrial enolase superfamily member 1 (443 aa).

Substrate is bound by residues 24 to 26 (GSD) and tyrosine 34. A Phosphoserine modification is found at serine 148. Lysine 220 is a substrate binding site. Lysine 222 functions as the Proton donor/acceptor in the catalytic mechanism. Aspartate 250 serves as a coordination point for Mg(2+). Substrate is bound by residues asparagine 252, glutamate 276, glutamate 305, 355 to 357 (HAG), and glutamate 386. Positions 276 and 305 each coordinate Mg(2+). The active site involves histidine 355.

The protein belongs to the mandelate racemase/muconate lactonizing enzyme family. ENOSF1 subfamily. Mg(2+) serves as cofactor. In terms of processing, could be sumoylated.

Its subcellular location is the mitochondrion. It carries out the reaction L-fuconate = 2-dehydro-3-deoxy-L-fuconate + H2O. In terms of biological role, plays a role in the catabolism of L-fucose, a sugar that is part of the carbohydrates that are attached to cellular glycoproteins. Catalyzes the dehydration of L-fuconate to 2-keto-3-deoxy-L-fuconate by the abstraction of the 2-proton to generate an enediolate intermediate that is stabilized by the magnesium ion. May down-regulate thymidylate synthase activity, possibly already at the RNA level, by promoting the degradation of TYMS mRNA via an antisense RNA-based mechanism. The chain is Mitochondrial enolase superfamily member 1 (ENOSF1) from Pongo abelii (Sumatran orangutan).